A 622-amino-acid polypeptide reads, in one-letter code: MSRSGDRTSTFDPSHSDNLLHGLNLLWRKQLFCDVTLTAQGQQFHCHKAVLASCSQYFRSLFSSGGGHPHALALGPGAQDGLGGAPPKEPPPPPQEEPGTPSSSPEDKLLASPRAINNLVLQGCSSIGLRLVLEYLYTANVTLSLDTVEEVLSVSKILHIPQVTKLCVQFLNDQISVQNYKQVCKIAALHGLEETKKLANKYLVEDVLLLNFEEMRALLDSLPPPVESELALFQMSVLWLEHDRETRMQYAPDLMKRLRFALIPAPELVERVQSVDFMRTDPVCQKLLLDAMNYHLMPFRQHCRQSLASRIRSNKKMLLLVGGLPPGPDRLPSNLVQYYDDEKKTWKILTIMPYNSAHHCVVEVENFLFVLGGEDQWNPNGKHSTNFVSRYDPRFNSWIQLPPMQERRASFYACRLDKNLYVIGGRNETGYLSSVECYNLETNEWRYVSSLPQPLAAHAGAVHNGKIYISGGVHNGEYVPWLYCYDPVMDVWARKQDMNTKRAIHTLAVMNDRLYAIGGNHLKGFSHLDVMLVECYDPKGDQWNILQTPILEGRSGPGCAVLDDSIYLVGGYSWSMGAYKSSTICYSPEKGTWTELEGDVAEPLAGPACSTVILPACVPYNK.

One can recognise a BTB domain in the interval 33-145 (CDVTLTAQGQ…LYTANVTLSL (113 aa)). The segment at 73–108 (ALGPGAQDGLGGAPPKEPPPPPQEEPGTPSSSPEDK) is disordered. A compositionally biased stretch (pro residues) spans 87-96 (PKEPPPPPQE). 6 Kelch repeats span residues 317–366 (MLLL…EVEN), 367–418 (FLFV…RLDK), 419–465 (NLYV…VHNG), 467–512 (IYIS…VMND), 514–564 (LYAI…VLDD), and 566–614 (IYLV…TVIL).

Its subcellular location is the cytoplasm. It localises to the cytosol. It is found in the endoplasmic reticulum membrane. The polypeptide is Kelch-like protein 14 (KLHL14) (Gallus gallus (Chicken)).